Reading from the N-terminus, the 373-residue chain is Centrosomal protein of 41 kDa (373 aa).

Positions 91–137 (LEDNDSATSEADAEIAAKTNGKGSPEEQSPSPVQFINSTGAGDSSRS) are disordered. Phosphoserine occurs at positions 96 and 99. T109 carries the phosphothreonine modification. A phosphoserine mark is found at S114 and S121. Residues 116–137 (EEQSPSPVQFINSTGAGDSSRS) show a composition bias toward polar residues. The 98-residue stretch at 169–266 (PDCPFLLLDV…LAQKFPEGLV (98 aa)) folds into the Rhodanese domain. The segment at 317–373 (DQGPADNPSRLNQNNSAGKDSKVAACRGGQNLPTSCPASHSSPRTLTSGHLQGKPWK) is disordered. Polar residues predominate over residues 325-334 (SRLNQNNSAG). The residue at position 343 (R343) is an Omega-N-methylarginine. The segment covering 347 to 366 (NLPTSCPASHSSPRTLTSGH) has biased composition (polar residues).

It belongs to the CEP41 family. As to quaternary structure, found in a complex with TTLL6.

Its subcellular location is the cytoplasm. It is found in the cytoskeleton. The protein resides in the microtubule organizing center. The protein localises to the centrosome. It localises to the cell projection. Its subcellular location is the cilium. It is found in the cilium basal body. Functionally, required during ciliogenesis for tubulin glutamylation in cilium. Probably acts by participating in the transport of TTLL6, a tubulin polyglutamylase, between the basal body and the cilium. This chain is Centrosomal protein of 41 kDa (Cep41), found in Mus musculus (Mouse).